Here is a 295-residue protein sequence, read N- to C-terminus: ATP synthase gamma chain (295 aa).

This sequence belongs to the ATPase gamma chain family. F-type ATPases have 2 components, CF(1) - the catalytic core - and CF(0) - the membrane proton channel. CF(1) has five subunits: alpha(3), beta(3), gamma(1), delta(1), epsilon(1). CF(0) has three main subunits: a, b and c.

It is found in the cell membrane. Functionally, produces ATP from ADP in the presence of a proton gradient across the membrane. The gamma chain is believed to be important in regulating ATPase activity and the flow of protons through the CF(0) complex. The polypeptide is ATP synthase gamma chain (Caldanaerobacter subterraneus subsp. tengcongensis (strain DSM 15242 / JCM 11007 / NBRC 100824 / MB4) (Thermoanaerobacter tengcongensis)).